Here is a 195-residue protein sequence, read N- to C-terminus: HTH-type transcriptional regulator BetI (195 aa).

An HTH tetR-type domain is found at 8 to 68; it reads SIRRRQLIDA…ATMRDITSQL (61 aa). The H-T-H motif DNA-binding region spans 31 to 50; the sequence is TIAQIARRAGVSTGIISHYF.

It participates in amine and polyamine biosynthesis; betaine biosynthesis via choline pathway [regulation]. Repressor involved in the biosynthesis of the osmoprotectant glycine betaine. It represses transcription of the choline transporter BetT and the genes of BetAB involved in the synthesis of glycine betaine. This is HTH-type transcriptional regulator BetI from Shigella flexneri serotype 5b (strain 8401).